A 215-amino-acid chain; its full sequence is Phosphatidylserine decarboxylase proenzyme (215 aa).

Residue S183 is the Schiff-base intermediate with substrate; via pyruvic acid of the active site. S183 carries the post-translational modification Pyruvic acid (Ser); by autocatalysis.

This sequence belongs to the phosphatidylserine decarboxylase family. PSD-A subfamily. As to quaternary structure, heterodimer of a large membrane-associated beta subunit and a small pyruvoyl-containing alpha subunit. Pyruvate is required as a cofactor. In terms of processing, is synthesized initially as an inactive proenzyme. Formation of the active enzyme involves a self-maturation process in which the active site pyruvoyl group is generated from an internal serine residue via an autocatalytic post-translational modification. Two non-identical subunits are generated from the proenzyme in this reaction, and the pyruvate is formed at the N-terminus of the alpha chain, which is derived from the carboxyl end of the proenzyme. The post-translation cleavage follows an unusual pathway, termed non-hydrolytic serinolysis, in which the side chain hydroxyl group of the serine supplies its oxygen atom to form the C-terminus of the beta chain, while the remainder of the serine residue undergoes an oxidative deamination to produce ammonia and the pyruvoyl prosthetic group on the alpha chain.

It is found in the cell membrane. It catalyses the reaction a 1,2-diacyl-sn-glycero-3-phospho-L-serine + H(+) = a 1,2-diacyl-sn-glycero-3-phosphoethanolamine + CO2. The protein operates within phospholipid metabolism; phosphatidylethanolamine biosynthesis; phosphatidylethanolamine from CDP-diacylglycerol: step 2/2. Catalyzes the formation of phosphatidylethanolamine (PtdEtn) from phosphatidylserine (PtdSer). This chain is Phosphatidylserine decarboxylase proenzyme, found in Symbiobacterium thermophilum (strain DSM 24528 / JCM 14929 / IAM 14863 / T).